Here is a 304-residue protein sequence, read N- to C-terminus: Homoserine kinase (304 aa).

Residue 92–102 (PLARGLGSSAT) coordinates ATP.

It belongs to the GHMP kinase family. Homoserine kinase subfamily.

Its subcellular location is the cytoplasm. The enzyme catalyses L-homoserine + ATP = O-phospho-L-homoserine + ADP + H(+). The protein operates within amino-acid biosynthesis; L-threonine biosynthesis; L-threonine from L-aspartate: step 4/5. Catalyzes the ATP-dependent phosphorylation of L-homoserine to L-homoserine phosphate. The polypeptide is Homoserine kinase (Nostoc punctiforme (strain ATCC 29133 / PCC 73102)).